The following is a 474-amino-acid chain: Bifunctional protein HldE (474 aa).

The ribokinase stretch occupies residues Met1 to Glu318. ATP is bound at residue Asn194–Glu197. Asp263 is an active-site residue. The interval Phe343–Gly474 is cytidylyltransferase.

This sequence in the N-terminal section; belongs to the carbohydrate kinase PfkB family. It in the C-terminal section; belongs to the cytidylyltransferase family. As to quaternary structure, homodimer.

The catalysed reaction is D-glycero-beta-D-manno-heptose 7-phosphate + ATP = D-glycero-beta-D-manno-heptose 1,7-bisphosphate + ADP + H(+). It carries out the reaction D-glycero-beta-D-manno-heptose 1-phosphate + ATP + H(+) = ADP-D-glycero-beta-D-manno-heptose + diphosphate. Its pathway is nucleotide-sugar biosynthesis; ADP-L-glycero-beta-D-manno-heptose biosynthesis; ADP-L-glycero-beta-D-manno-heptose from D-glycero-beta-D-manno-heptose 7-phosphate: step 1/4. The protein operates within nucleotide-sugar biosynthesis; ADP-L-glycero-beta-D-manno-heptose biosynthesis; ADP-L-glycero-beta-D-manno-heptose from D-glycero-beta-D-manno-heptose 7-phosphate: step 3/4. Its function is as follows. Catalyzes the phosphorylation of D-glycero-D-manno-heptose 7-phosphate at the C-1 position to selectively form D-glycero-beta-D-manno-heptose-1,7-bisphosphate. Catalyzes the ADP transfer from ATP to D-glycero-beta-D-manno-heptose 1-phosphate, yielding ADP-D-glycero-beta-D-manno-heptose. This Pseudomonas paraeruginosa (strain DSM 24068 / PA7) (Pseudomonas aeruginosa (strain PA7)) protein is Bifunctional protein HldE.